Here is a 242-residue protein sequence, read N- to C-terminus: Phosphomannomutase 2 (242 aa).

The active-site Nucleophile is D8. Mg(2+)-binding residues include D8 and D10. The active-site Proton donor/acceptor is the D10. Alpha-D-mannose 1-phosphate contacts are provided by R17, R119, R130, and R137. N6-acetyllysine is present on K145. Alpha-D-mannose 1-phosphate is bound by residues S175 and D177. Mg(2+)-binding residues include D205, F217, D219, and T222.

It belongs to the eukaryotic PMM family. In terms of assembly, homodimer.

The protein localises to the cytoplasm. The enzyme catalyses alpha-D-mannose 1-phosphate = D-mannose 6-phosphate. It functions in the pathway nucleotide-sugar biosynthesis; GDP-alpha-D-mannose biosynthesis; alpha-D-mannose 1-phosphate from D-fructose 6-phosphate: step 2/2. Involved in the synthesis of the GDP-mannose and dolichol-phosphate-mannose required for a number of critical mannosyl transfer reactions. The protein is Phosphomannomutase 2 (Pmm2) of Mus musculus (Mouse).